The following is a 223-amino-acid chain: ATP synthase subunit a 1 (223 aa).

Helical transmembrane passes span 20–40 (QTIVMTWVIMVFLAGGSAFLT), 78–98 (YLSYLATLFLFVATAVLFTII), 107–127 (SLSTTAALALSVFVAVPLYGI), 173–193 (VMIIGILLGIAPLFFPVLMSV), and 194–214 (LGLLTGMVQAYIFSMLATVYI).

This sequence belongs to the ATPase A chain family. As to quaternary structure, F-type ATPases have 2 components, CF(1) - the catalytic core - and CF(0) - the membrane proton channel. CF(1) has five subunits: alpha(3), beta(3), gamma(1), delta(1), epsilon(1). CF(0) has four main subunits: a, b, b' and c.

It is found in the cell inner membrane. Functionally, key component of the proton channel; it plays a direct role in the translocation of protons across the membrane. This is ATP synthase subunit a 1 from Prosthecochloris aestuarii (strain DSM 271 / SK 413).